A 93-amino-acid chain; its full sequence is Alpha-defensin 6/12 (93 aa).

An N-terminal signal peptide occupies residues 1-19; that stretch reads MKTLILLSALVLLAFQVQA. A propeptide spanning residues 20-60 is cleaved from the precursor; the sequence is DPIQNTDEETKTEEQPGEEDQAVSVSFGDPEGTSLQEESLR. A disordered region spans residues 23-54; it reads QNTDEETKTEEQPGEEDQAVSVSFGDPEGTSL. Intrachain disulfides connect Cys-64/Cys-92, Cys-66/Cys-81, and Cys-71/Cys-91.

This sequence belongs to the alpha-defensin family. As to expression, paneth cells of the small bowel.

The protein resides in the secreted. Has broad-spectrum antimicrobial properties. Has antibacterial activity against the Gram-positive bacterium L.monocytogenes EGD and the Gram-negative bacteria E.coli ML-35p and avirulent S.typhimurium 7953, but not against the mouse-virulent S.typhimurium 14028S. Probably contributes to the antimicrobial barrier function of the small bowel mucosa. The chain is Alpha-defensin 6/12 (Defa6) from Mus musculus (Mouse).